Consider the following 118-residue polypeptide: Holo-[acyl-carrier-protein] synthase (118 aa).

Asp8 and Glu57 together coordinate Mg(2+).

The protein belongs to the P-Pant transferase superfamily. AcpS family. Requires Mg(2+) as cofactor.

It localises to the cytoplasm. The enzyme catalyses apo-[ACP] + CoA = holo-[ACP] + adenosine 3',5'-bisphosphate + H(+). Transfers the 4'-phosphopantetheine moiety from coenzyme A to a Ser of acyl-carrier-protein. The chain is Holo-[acyl-carrier-protein] synthase from Acholeplasma laidlawii (strain PG-8A).